A 409-amino-acid polypeptide reads, in one-letter code: F-box/kelch-repeat protein At2g44130 (409 aa).

Residues 17 to 63 form the F-box domain; sequence HELIPGLPSELALECLVRVPFQFQSAMRSVCRSWRSLLSDSSFIQER. Kelch repeat units follow at residues 98-148, 151-199, 201-248, and 251-300; these read KKSE…VLQD, KILL…SVSP, KVYV…AVGM, and RFCV…RTAG.

This chain is F-box/kelch-repeat protein At2g44130, found in Arabidopsis thaliana (Mouse-ear cress).